The sequence spans 340 residues: Guanine nucleotide-binding protein G(I)/G(S)/G(T) subunit beta-3 (340 aa).

7 WD repeats span residues 53-83 (GHLAKIYAMHWATDSKLLVSASQDGKLIVWD), 95-125 (LRSSWVMTCAYAPSGNFVACGGLDNMCSIYS), 141-170 (AHTGYLSCCRFLDDNNIVTSSGDTTCALWD), 182-212 (GHTGDCMSLAVSPDFKLFISGACDASAKLWD), 224-254 (GHESDINAICFFPNGEAICTGSDDASCRLFD), 268-298 (SIICGITSVAFSLSGRLLFAGYDDFNCNIWD), and 310-340 (GHDNRVSCLGVTADGMAVATGSWDSFLKVWN).

It belongs to the WD repeat G protein beta family. G proteins are composed of 3 units, alpha, beta and gamma. Interacts with RASD2.

The protein localises to the cytoplasm. It is found in the perinuclear region. Guanine nucleotide-binding proteins (G proteins) are involved as a modulator or transducer in various transmembrane signaling systems. The beta and gamma chains are required for the GTPase activity, for replacement of GDP by GTP, and for G protein-effector interaction. The chain is Guanine nucleotide-binding protein G(I)/G(S)/G(T) subunit beta-3 (GNB3) from Canis lupus familiaris (Dog).